The primary structure comprises 475 residues: Ribulose bisphosphate carboxylase large chain (475 aa).

Positions 1 to 2 (MS) are excised as a propeptide. An N-acetylproline modification is found at Pro-3. Lys-14 bears the N6,N6,N6-trimethyllysine mark. Residues Asn-123 and Thr-173 each coordinate substrate. Lys-175 acts as the Proton acceptor in catalysis. Lys-177 serves as a coordination point for substrate. Mg(2+)-binding residues include Lys-201, Asp-203, and Glu-204. Lys-201 is subject to N6-carboxylysine. His-294 serves as the catalytic Proton acceptor. Residues Arg-295, His-327, and Ser-379 each coordinate substrate.

It belongs to the RuBisCO large chain family. Type I subfamily. As to quaternary structure, heterohexadecamer of 8 large chains and 8 small chains; disulfide-linked. The disulfide link is formed within the large subunit homodimers. Requires Mg(2+) as cofactor. Post-translationally, the disulfide bond which can form in the large chain dimeric partners within the hexadecamer appears to be associated with oxidative stress and protein turnover.

It is found in the plastid. The protein resides in the chloroplast. It catalyses the reaction 2 (2R)-3-phosphoglycerate + 2 H(+) = D-ribulose 1,5-bisphosphate + CO2 + H2O. The catalysed reaction is D-ribulose 1,5-bisphosphate + O2 = 2-phosphoglycolate + (2R)-3-phosphoglycerate + 2 H(+). RuBisCO catalyzes two reactions: the carboxylation of D-ribulose 1,5-bisphosphate, the primary event in carbon dioxide fixation, as well as the oxidative fragmentation of the pentose substrate in the photorespiration process. Both reactions occur simultaneously and in competition at the same active site. This Nandina domestica (Heavenly bamboo) protein is Ribulose bisphosphate carboxylase large chain.